A 426-amino-acid chain; its full sequence is Inhibin beta A chain (426 aa).

A signal peptide spans 1–20; sequence MPLLWLRGFLLASCWIIVKS. The propeptide occupies 21–310; sequence SPTPGSEGHS…EDHPHRRRRR (290 aa). An N-linked (GlcNAc...) asparagine glycan is attached at Asn-165. Over residues 177 to 186 the composition is skewed to polar residues; the sequence is QQQKHPQGSS. Disordered stretches follow at residues 177–201 and 260–291; these read QQQKHPQGSSDTREEAEEADLMEER and KKKKEEEGEGKKKDGGEAGAGVDEEKEQSHRP. The span at 263-275 shows a compositional bias: basic and acidic residues; the sequence is KEEEGEGKKKDGG. 4 cysteine pairs are disulfide-bonded: Cys-314–Cys-322, Cys-321–Cys-391, Cys-350–Cys-423, and Cys-354–Cys-425.

It belongs to the TGF-beta family. Dimeric, linked by one or more disulfide bonds. Inhibin A is a dimer of alpha/INHA and beta-A/INHBA. Activin A is a homodimer of beta-A/INHBA. Activin AB is a dimer of beta-A/INHBA and beta-B/INHBB. Interacts with FST and FSTL3; these interactions prevent activin A interaction to its type II receptor. Activin A interacts with ACVR2A. Activin A interacts with BMPR2. Inhibin A interacts with ACVR1; this interaction creates a non-signaling complex (NSC) that inhibits ACVR1-mediated BMP signaling. Inhibin A interacts with ACVR2A.

Its subcellular location is the secreted. Its function is as follows. Inhibins/activins are involved in regulating a number of diverse functions such as hypothalamic and pituitary hormone secretion, gonadal hormone secretion, germ cell development and maturation, erythroid differentiation, insulin secretion, nerve cell survival, embryonic axial development or bone growth, depending on their subunit composition. Activin A is a homodimer of INHBA that plays a role in several essential biological processes including embryonic development, stem cell maintenance and differentiation, haematopoiesis, cell proliferation and tissue fibrosis. Signals through type I (such as ACVR1B or ACVR1C) and type II receptors (such as ACVR2A, ACVR2B or BMPR2) which, upon ligand binding, phosphorylate SMAD2 and SMAD3 intracellular signaling mediators that form a complex with SMAD4, translocate to the nucleus and modulate gene expression. Can also activate alternative non-canonical intracellular signaling pathways including the p38 MAPK, extracellular signal-regulated kinases 1/2 (ERK1/2) and c-Jun N-terminal kinases (JNKs) to modulate cell migration and differentiation. Alternatively, promotes osteoblastic differentiation via ACVRL1-SMAD1/5/9 pathway. In addition, can engage the type I receptor ACVR1 to form an ACVR1-activin A-type II receptor non-signaling complex (NSC) that renders receptors unavailable for engagement with BMPs, hence resulting in an apparent inhibition of ACVR1-mediated BMP signaling. Functionally, inhibin A is a dimer of alpha/INHA and beta-A/INHBA that functions as a feedback regulator in the hypothalamic-pituitary-gonadal (HPG) axis. Inhibits the secretion of FSH from the anterior pituitary gland by acting on pituitary gonadotrope cells. Antagonizes activin A by binding to the proteoglycan, betaglycan, and forming a stable complex with and, thereby, sequestering type II activin receptors while excluding type I receptor. The sequence is that of Inhibin beta A chain (INHBA) from Equus caballus (Horse).